Consider the following 276-residue polypeptide: MLTINLPKTFKVKYLLIALALFYLILVLLLPAIAVFYEAFHKGVEPFIQAMGDRNFQSALQLTVVMALISVPLNTVFGLCAAWVLARNQFPGRALFLSVLDLPFSISPVVAGLMIVLLYGKNGWIGSWFASWDIQIIFSVPGMAIATIFVTLPFVAREVIPVLEELGPEQEEAARTLGAKDWQIFWRVTLPNIRWGLLYGVLLTNARAMGEFGAVAVVSGSILGKTSTLPIFVEQEYKNYQTEAAFGAAVVLALLAVVTLVLKEILEQRTGHHKAV.

6 helical membrane passes run 16–36, 64–84, 99–119, 136–156, 212–232, and 242–262; these read LIAL…IAVF, VVMA…AAWV, VLDL…VLLY, IIFS…PFVA, FGAV…LPIF, and TEAA…TLVL. One can recognise an ABC transmembrane type-1 domain in the interval 60 to 267; sequence LQLTVVMALI…VTLVLKEILE (208 aa).

This sequence belongs to the binding-protein-dependent transport system permease family. CysTW subfamily. As to quaternary structure, the complex is composed of two ATP-binding proteins (CysA), two transmembrane proteins (CysT and CysW) and a solute-binding protein (CysP).

The protein localises to the cell inner membrane. Functionally, part of the ABC transporter complex CysAWTP (TC 3.A.1.6.1) involved in sulfate/thiosulfate import. Probably responsible for the translocation of the substrate across the membrane. This Synechocystis sp. (strain ATCC 27184 / PCC 6803 / Kazusa) protein is Sulfate transport system permease protein CysW (cysW).